The sequence spans 988 residues: RecQ-like DNA helicase blm-1 (988 aa).

The segment at 46–119 (CEEREEEYID…QFPSRPQKRL (74 aa)) is disordered. Tandem repeats lie at residues 121–129 (DPPIVDLDE) and 130–138 (EPPIVDLDD). The 2 X 9 AA tandem repeats of [DE]-P-P-I-V-D-L-D-[ED] stretch occupies residues 121–138 (DPPIVDLDEEPPIVDLDD). Residues 148 to 185 (TSEEVVSGDIAPEEEEEEGHDSFDDFESVPAQPPSKNT) are disordered. A compositionally biased stretch (acidic residues) spans 158–174 (APEEEEEEGHDSFDDFE). ATP is bound by residues 248-252 (FRHRQ) and 272-276 (GAGKS). The 178-residue stretch at 256–433 (ILSTLMGHDT…RDHLKMQNSK (178 aa)) folds into the Helicase ATP-binding domain. The DEAH box signature appears at 375 to 378 (DEAH). The region spanning 458–603 (NVVEKMKQLY…VRSMHLNNVL (146 aa)) is the Helicase C-terminal domain. The tract at residues 478–480 (SRK) is 3' overhang DNA-binding. Arg562 lines the ATP pocket. The segment at 580–583 (RLRR) is 3' overhang DNA-binding. Zn(2+) contacts are provided by Cys615, Cys633, Cys640, and Cys643. 3' overhang DNA-binding regions lie at residues 676-678 (TLK), 687-691 (ALIKK), and 736-742 (YSVPNQA). Residues 807–888 (GDVFTRCLQD…ATYWKQVDER (82 aa)) form the HRDC domain. The disordered stretch occupies residues 930–988 (GGGGCRGRGKKRAFSGFSSGRATKKPRATAPSARGKTSGRGGAKPATSLKRNMYPATSM). The Nuclear localization signal signature appears at 939 to 955 (KKRAFSGFSSGRATKKP).

This sequence belongs to the helicase family. RecQ subfamily. Monomer. Homodimer (via N-terminus). Homotetramer (via N-terminus); dimer of dimers. Homohexamer (via N-terminus). Self-association negatively regulates DNA unwinding amplitude and rate. Oligomer forms dissociate into monomer in presence of ATP. Component of the BTR double Holliday Junction dissolution complex composed of at least him-6, top-3, rmh-1 and rmif-2, which is involved in double strand break repair in the germline. May interact with rmh-1; the interaction is required for mutual stability and localization at nuclear foci. Forms a complex composed of cdc-48.1, him-6 and crp-1; within the complex, interacts with cdc-48.1. The cofactor is Zn(2+).

Its subcellular location is the nucleus. The protein resides in the chromosome. It carries out the reaction Couples ATP hydrolysis with the unwinding of duplex DNA by translocating in the 3'-5' direction.. The catalysed reaction is ATP + H2O = ADP + phosphate + H(+). Its function is as follows. Component of the BTR double Holliday Junction dissolution complex, which is involved in homologous recombination during meiotic double strand break in the germline. Stabilizes and positively regulates the localization of the BTR double Holliday Junction dissolution complex component rmh-1 at nuclear foci during meiotic recombination. Participates in DNA replication and repair. Exhibits a magnesium-dependent ATP-dependent DNA-helicase activity that unwinds single- and double-stranded DNA in a 3'-5' direction. Negatively regulates sister chromatid exchange (SCE). In terms of biological role, ATP-dependent DNA helicase that unwinds single- and double-stranded DNA in a 3'-5' direction. Participates in DNA replication and repair. Negatively regulates sister chromatid exchange (SCE). Stimulates DNA 4-way junction branch migration and DNA Holliday junction dissolution. Binds single-stranded DNA (ssDNA), forked duplex DNA and DNA Holliday junction. This is RecQ-like DNA helicase blm-1 from Caenorhabditis elegans.